Consider the following 265-residue polypeptide: Large ribosomal subunit protein eL8 (265 aa).

This sequence belongs to the eukaryotic ribosomal protein eL8 family. Interacts with cmd-1 in the presence of Ca(2+).

The sequence is that of Large ribosomal subunit protein eL8 from Caenorhabditis elegans.